Here is a 140-residue protein sequence, read N- to C-terminus: Small ribosomal subunit protein uS11 (140 aa).

A disordered region spans residues 116 to 140; sequence GRVEDVTPIPHDGTRPKGGRRGRRV.

Belongs to the universal ribosomal protein uS11 family. Part of the 30S ribosomal subunit.

Functionally, located on the platform of the 30S subunit. In Thermococcus kodakarensis (strain ATCC BAA-918 / JCM 12380 / KOD1) (Pyrococcus kodakaraensis (strain KOD1)), this protein is Small ribosomal subunit protein uS11.